The primary structure comprises 686 residues: Mannan-binding lectin serine protease 2 (686 aa).

The N-terminal stretch at 1–15 is a signal peptide; that stretch reads MRLLTLLGLLCGSVA. The CUB 1 domain maps to 16–137; the sequence is TPLGPKWPEP…TGFEAFYAAE (122 aa). Residues Glu-67, Asp-75, Asp-120, Ser-122, Asn-123, Asp-138, Ile-139, and Glu-141 each contribute to the Ca(2+) site. A disulfide bridge connects residues Cys-72 and Cys-90. In terms of domain architecture, EGF-like; calcium-binding spans 138 to 181; the sequence is DIDECQVAPGEAPTCDHHCHNHLGGFYCSCRAGYVLHRNKRTCS. Cystine bridges form between Cys-142-Cys-156, Cys-152-Cys-165, Cys-167-Cys-180, Cys-184-Cys-211, Cys-241-Cys-259, Cys-300-Cys-348, Cys-328-Cys-361, Cys-366-Cys-412, Cys-396-Cys-430, Cys-434-Cys-552, Cys-598-Cys-618, and Cys-629-Cys-660. Residues Asn-158, His-159, and Gly-162 each coordinate Ca(2+). Asn-158 bears the (3R)-3-hydroxyasparagine mark. One can recognise a CUB 2 domain in the interval 184 to 296; the sequence is CSGQVFTQRS…TGWKIHYTST (113 aa). 2 consecutive Sushi domains span residues 298–363 and 364–432; these read QPCP…ACSI and VDCG…VCEP. Residues 445 to 684 form the Peptidase S1 domain; the sequence is IYGGQKAKPG…YIPWIENIIS (240 aa). Residues His-483 and Asp-532 each act as charge relay system in the active site. The active-site Charge relay system is Ser-633.

The protein belongs to the peptidase S1 family. Homodimer; disulfide-linked. Binds MBL2. Isoform 2 binds to MASP1. Binds SERPING1. Dimerization and MBL2 binding requires calcium ions. Post-translationally, the iron and 2-oxoglutarate dependent 3-hydroxylation of aspartate and asparagine is (R) stereospecific within EGF domains. Activated by cleavage after Arg-444. The uncleaved zymogen is inactive towards synthetic substrates, but has sufficient activity to effect autocatalytic cleavage. As to expression, plasma.

The protein localises to the secreted. It catalyses the reaction Selective cleavage after Arg-223 in complement component C2 (-Ser-Leu-Gly-Arg-|-Lys-Ile-Gln-Ile) and after Arg-76 in complement component C4 (-Gly-Leu-Gln-Arg-|-Ala-Leu-Glu-Ile).. Its function is as follows. Serum protease that plays an important role in the activation of the complement system via mannose-binding lectin. After activation by auto-catalytic cleavage it cleaves C2 and C4, leading to their activation and to the formation of C3 convertase. The sequence is that of Mannan-binding lectin serine protease 2 (MASP2) from Homo sapiens (Human).